The primary structure comprises 145 residues: Phospholipase A2 phospholipin (145 aa).

The signal sequence occupies residues 1-15 (MVDLARRCSGSTEGR). Positions 24, 26, and 28 each coordinate Ca(2+). 5 disulfides stabilise this stretch: Cys-25-Cys-46, Cys-45-Cys-84, Cys-52-Cys-77, Cys-75-Cys-116, and Cys-121-Cys-132. His-49 is a catalytic residue. Asp-50 serves as a coordination point for Ca(2+). Residues 124 to 128 (KRSGR) constitute a propeptide that is removed on maturation.

It belongs to the phospholipase A2 family. Group III subfamily. In terms of assembly, heterodimer composed of a small subunit and a large subunit; disulfid-linked. It depends on Ca(2+) as a cofactor. Expressed by the venom gland.

Its subcellular location is the secreted. The enzyme catalyses a 1,2-diacyl-sn-glycero-3-phosphocholine + H2O = a 1-acyl-sn-glycero-3-phosphocholine + a fatty acid + H(+). Scorpion venom phospholipase A2 (PLA2) that contains enzymatic activity, but does not inhibit ryanodine receptors in contrary to imperatoxin-1, another heterodimer of P.imperator venom. PLA2 catalyzes the calcium-dependent hydrolysis of the 2-acyl groups in 3-sn-phosphoglycerides. The chain is Phospholipase A2 phospholipin from Pandinus imperator (Emperor scorpion).